Consider the following 362-residue polypeptide: Caveolae-associated protein 4 (362 aa).

Residues 1–24 (MEHNGSASNAGKIHQNRLSSVTED) are disordered. Residues 100-120 (IKDVKARVEKQQVRVTKVETK) are a coiled coil. Residues Ser-152, Ser-171, and Ser-172 each carry the phosphoserine modification. Residues 227-255 (PERRERLRQSGERLRQSGERLRQSGERFK) are compositionally biased toward basic and acidic residues. The interval 227 to 261 (PERRERLRQSGERLRQSGERLRQSGERFKKSISNA) is disordered. Position 324 is a phosphotyrosine (Tyr-324). Thr-334 bears the Phosphothreonine mark. Phosphoserine is present on Ser-353.

It belongs to the CAVIN family. In terms of assembly, component of the CAVIN complex composed of CAVIN1, CAVIN2, CAVIN3 and CAVIN4. Interacts with CAVIN1, CAV3, ADRA1A and ADRA1B. Interacts with CAVIN2; this augments the transactivation of NPPA. Interacts with MAPK1 and MAPK3. In terms of tissue distribution, expressed at much higher levels in cardiomyocytes than in non-cardiomyocytes.

The protein localises to the cytoplasm. It localises to the myofibril. It is found in the sarcomere. The protein resides in the cytosol. Its subcellular location is the cell membrane. The protein localises to the sarcolemma. It localises to the membrane. It is found in the caveola. Its function is as follows. Modulates the morphology of formed caveolae in cardiomyocytes, but is not required for caveolar formation. Facilitates the recruitment of MAPK1/3 to caveolae within cardiomyocytes and regulates alpha-1 adrenergic receptor-induced hypertrophic responses in cardiomyocytes through MAPK1/3 activation. Contributes to proper membrane localization and stabilization of caveolin-3 (CAV3) in cardiomyocytes. Induces RHOA activation and activates NPPA transcription and myofibrillar organization through the Rho/ROCK signaling pathway. The chain is Caveolae-associated protein 4 from Rattus norvegicus (Rat).